We begin with the raw amino-acid sequence, 218 residues long: Ribose-5-phosphate isomerase A (218 aa).

Substrate contacts are provided by residues 28–31 (TGST), 81–84 (DGAD), and 94–97 (KGGG). Residue glutamate 103 is the Proton acceptor of the active site. Lysine 121 is a substrate binding site.

Belongs to the ribose 5-phosphate isomerase family. Homodimer.

The catalysed reaction is aldehydo-D-ribose 5-phosphate = D-ribulose 5-phosphate. Its pathway is carbohydrate degradation; pentose phosphate pathway; D-ribose 5-phosphate from D-ribulose 5-phosphate (non-oxidative stage): step 1/1. Functionally, catalyzes the reversible conversion of ribose-5-phosphate to ribulose 5-phosphate. The protein is Ribose-5-phosphate isomerase A of Sodalis glossinidius (strain morsitans).